The primary structure comprises 222 residues: Protein-L-isoaspartate O-methyltransferase (222 aa).

Serine 72 is a catalytic residue.

This sequence belongs to the methyltransferase superfamily. L-isoaspartyl/D-aspartyl protein methyltransferase family.

The protein localises to the cytoplasm. It carries out the reaction [protein]-L-isoaspartate + S-adenosyl-L-methionine = [protein]-L-isoaspartate alpha-methyl ester + S-adenosyl-L-homocysteine. In terms of biological role, catalyzes the methyl esterification of L-isoaspartyl residues in peptides and proteins that result from spontaneous decomposition of normal L-aspartyl and L-asparaginyl residues. It plays a role in the repair and/or degradation of damaged proteins. The protein is Protein-L-isoaspartate O-methyltransferase of Picosynechococcus sp. (strain ATCC 27264 / PCC 7002 / PR-6) (Agmenellum quadruplicatum).